The chain runs to 357 residues: Peptide chain release factor 1 (357 aa).

Gln234 is modified (N5-methylglutamine). Basic and acidic residues predominate over residues 284–307 (KKQEQRSNDRKQQVGSGDRSERIR). Residues 284–313 (KKQEQRSNDRKQQVGSGDRSERIRTYNFPQ) form a disordered region.

The protein belongs to the prokaryotic/mitochondrial release factor family. Methylated by PrmC. Methylation increases the termination efficiency of RF1.

It is found in the cytoplasm. Its function is as follows. Peptide chain release factor 1 directs the termination of translation in response to the peptide chain termination codons UAG and UAA. The polypeptide is Peptide chain release factor 1 (Borrelia turicatae (strain 91E135)).